The following is a 293-amino-acid chain: Cell division protein FtsQ (293 aa).

Topologically, residues 1-29 (MSQVRSKSQQGKRQAKPQEVVPATILTEQ) are cytoplasmic. The chain crosses the membrane as a helical span at residues 30 to 52 (LSTYAFGTVTAGAVMVAVAAWMG). Topologically, residues 53–293 (GSLASIDERI…SQIDDKSGGA (241 aa)) are periplasmic. In terms of domain architecture, POTRA spans 75 to 144 (FTVTKISIEG…NDIWILAENR (70 aa)).

This sequence belongs to the FtsQ/DivIB family. FtsQ subfamily.

Its subcellular location is the cell inner membrane. Functionally, essential cell division protein. The polypeptide is Cell division protein FtsQ (Hirschia baltica (strain ATCC 49814 / DSM 5838 / IFAM 1418)).